Consider the following 63-residue polypeptide: Beta-glucosidase A-3 (63 aa).

Aspartate 12 is a catalytic residue. N-linked (GlcNAc...) asparagine glycans are attached at residues asparagine 48 and asparagine 56.

The protein belongs to the glycosyl hydrolase 3 family.

The enzyme catalyses Hydrolysis of terminal, non-reducing beta-D-glucosyl residues with release of beta-D-glucose.. Its pathway is glycan metabolism; cellulose degradation. The sequence is that of Beta-glucosidase A-3 from Aspergillus wentii.